The chain runs to 327 residues: MQIKRSIEKIPGGMMLVPLFLGALCHTFSPGAGKYFGSFTNGMITGTVPILAVWFFCMGASIKLSATGTVLRKSGTLVVTKIAVAWVVAAIASRIIPEHGVEVGFFAGLSTLALVAAMDMTNGGLYASIMQQYGTKEEAGAFVLMSLESGPLMTMIILGTAGIASFEPHVFVGAVLPFLVGFALGNLDPELREFFSKAVQTLIPFFAFALGNTIDLTVIAQTGLLGILLGVAVIIVTGIPLIIADKLIGGGDGTAGIAASSSAGAAVATPVLIAEMVPAFKPMAPAATSLVATAVIVTSILVPIITSIWSRKVKARAAKIEILGTVK.

The next 10 membrane-spanning stretches (helical) occupy residues I10 to P30, G42 to I62, K73 to S93, I95 to V115, A139 to G159, I163 to A183, V199 to I219, L224 to A244, T254 to A274, and S289 to W309.

The protein belongs to the KdgT transporter family.

The protein localises to the cell inner membrane. It catalyses the reaction 2-dehydro-3-deoxy-D-gluconate(in) + H(+)(in) = 2-dehydro-3-deoxy-D-gluconate(out) + H(+)(out). Catalyzes the proton-dependent uptake of 2-keto-3-deoxygluconate (KDG) into the cell. This Escherichia coli O139:H28 (strain E24377A / ETEC) protein is 2-keto-3-deoxygluconate permease.